An 802-amino-acid polypeptide reads, in one-letter code: MSFNHQEIEKKWQAYWEENKTFRTPDETDKPKFYALDMFPYPSGAGLHVGHPEGYTATDILSRMKRMQGYNVLHPMGWDAFGLPAEQYALDTGNSPAEFTEKNINTFRNQIKSLGFSYDWDREVNTTDPNYYKWTQWIFLKLFEKGLAYVDEIPVNWCPALGTVLANEEVIDGKSERGGHPVERRPMKQWMLKITAYADRLLEDLDELDWPESLKDMQRNWIGRSEGAEVHFNIDGTDKKFTIFTTRPDTLFGATYCVLAPEHALVAEITTEDQKGAVEAYIDVVKSKSDLERTELAKEKTGVFTGAYAINPVNGEKLPIWIADYVLASYGTGAVMAVPAHDERDYEFAKTFDLPMKEVVKGGDITKEAYTADGEHIDSAFLNGLNKEEAIAKMIEWLEVTGAGNQKVTYRLRDWLFSRQRYWGEPIPIIHWEDGTMTAVKEEELPLVLPKTDNIRPSGTGESPLANIDEWVNVVDPETGKKGRRETNTMPQWAGSCWYYLRYIDPNNNEALVDPEKAKQWLPVDIYIGGAEHAVLHLLYARFWHKVLYDIGVVPTKEPFQQLFNQGMILGENNEKMSKSKGNVVNPDDIVASHGADTLRLYEMFMGPLDASIAWSENGLDGARRFLDRVWRLFVQENGELSEKITDAPNKELEKAYHQTVKKVTEDYEELHFNTAISQMMMFINDAYKAETLPKEYVEGFVKLLAPVAPHIAEELWSKLGYNETITYASWPTFDESKLVEDEVEIVVQVMGKVRAKLKMKKDASKEEMEQLALEEVKEQIEGKTVRKVIVVPGKLVNIVAN.

Positions 40-51 (PYPSGAGLHVGH) match the 'HIGH' region motif. Positions 576–580 (KMSKS) match the 'KMSKS' region motif. Residue Lys-579 coordinates ATP.

It belongs to the class-I aminoacyl-tRNA synthetase family.

It localises to the cytoplasm. The enzyme catalyses tRNA(Leu) + L-leucine + ATP = L-leucyl-tRNA(Leu) + AMP + diphosphate. This Bacillus cytotoxicus (strain DSM 22905 / CIP 110041 / 391-98 / NVH 391-98) protein is Leucine--tRNA ligase.